The chain runs to 461 residues: MSRQKNQNSKGHGVSKGKEREQRTLIRFKTTLMNTLMDVLRHRPGWVEVKDEGEWDFYWCDVSWLRENFDHTYMDEHVRISHFRNHYELTRKNYMVKNLKRFRKYLERESGKTEAAKCDFFPKTFEMPCEYHLFVEEFRKNPGITWIMKPVARSQGKGIFLFRRLKDIMDWRKGTSGKKPTGVETQPARANMNPSGSHDTRSSDDQKDDLPVENYVAQRYVENPYLIGGRKFDLRVYVLVMSYIPLRAWLYRDGFARFSNTRFTLNSIDDHYVHLTNVAVQKTSPDYHLKKGCKWMLQRFRQYLASKHGPKAVETLFSDMDNIFIKSLQSVQKVIISDKHCFELYGYDILIDQDLKPWLLEVNASPSLTASSQEDYELKTCLLEDTLHVVDMEARLTGKEKRVGGFDLMWNDGPVSREDGPSDLSGMGNFVTNTHLGCVNDRKEQLRQLFRSLQAQRKAPS.

A compositionally biased stretch (polar residues) spans 1 to 10 (MSRQKNQNSK). Residues 1–20 (MSRQKNQNSKGHGVSKGKER) form a disordered region. In terms of domain architecture, TTL spans 22 to 402 (QRTLIRFKTT…EARLTGKEKR (381 aa)). ATP-binding positions include Lys149 and 155–156 (QG). Gln155 is a binding site for a protein. Positions 172–208 (RKGTSGKKPTGVETQPARANMNPSGSHDTRSSDDQKD) are disordered. The span at 198–208 (HDTRSSDDQKD) shows a compositional bias: basic and acidic residues. ATP contacts are provided by residues 218–221 (QRYV) and 231–233 (KFD). Arg257 lines the L-glutamate pocket. 276 to 277 (TN) serves as a coordination point for ATP. Position 294 (Lys294) interacts with L-glutamate. Mg(2+) contacts are provided by Asp348, Glu361, and Asn363. Residue Lys379 coordinates L-glutamate.

Belongs to the tubulin--tyrosine ligase family. Requires Mg(2+) as cofactor. Highly expressed in brain and testis. Expressed in heart, kidney and lung. In the brain, expressed in ependymal cilia, cortex, corpus callosum and striatum. In the testis, specifically expressed in the seminiferous tubules.

It localises to the cytoplasm. The protein localises to the cytoskeleton. Its subcellular location is the cilium basal body. The protein resides in the flagellum axoneme. It catalyses the reaction (L-glutamyl)(n)-gamma-L-glutamyl-L-glutamyl-[protein] + L-glutamate + ATP = (L-glutamyl)(n+1)-gamma-L-glutamyl-L-glutamyl-[protein] + ADP + phosphate + H(+). Its function is as follows. Probable tubulin polyglutamylase that generates side chains of glutamate on the gamma-carboxyl group of specific glutamate residues within the C-terminal tail of target proteins. Similar to TTLL1, may acquire enzymatic activity only in complex with other proteins as it is most likely lacking domains important for autonomous activity. Mediates tubulin polyglutamylation which induces establishment of microtubule heterogeneity in sperm flagella, thereby playing a role in normal motile flagella axoneme structure and sperm flagella beating pattern. This Mus musculus (Mouse) protein is Probable tubulin polyglutamylase TTLL9.